The primary structure comprises 689 residues: E3 ubiquitin-protein ligase RNF169 (689 aa).

The RING-type zinc-finger motif lies at 49–88; sequence CAGCLETPGEAAALPCGHSLCRGCAQRAADAAGPCCPRCR. Disordered regions lie at residues 95–148 and 178–238; these read ARRR…PAEP and KLQE…PSRG. Basic and acidic residues-rich tracts occupy residues 110–128 and 178–224; these read LGERARRGPPERCRPRRDG and KLQE…EHCP. Residues 186–194 carry the UMI motif motif; it reads EDQIHKLLP. A phosphoserine mark is found at serine 228 and serine 230. Residue lysine 267 forms a Glycyl lysine isopeptide (Lys-Gly) (interchain with G-Cter in SUMO2) linkage. Residues 268–277 show a composition bias toward polar residues; it reads MERSQSCSDT. A disordered region spans residues 268 to 299; the sequence is MERSQSCSDTGQDRAKSRLRAAPTSKAKATAM. At serine 320 the chain carries Phosphoserine. Lysine 343 participates in a covalent cross-link: Glycyl lysine isopeptide (Lys-Gly) (interchain with G-Cter in SUMO2). Residues serine 384 and serine 390 each carry the phosphoserine modification. A Phosphothreonine modification is found at threonine 391. Serine 466 is subject to Phosphoserine. The tract at residues 489 to 542 is disordered; the sequence is SQTKAEQGSDRKKNTEIPLETCCSSELPVGASGTSLEREQSERSGSSPDAKLDK. Lysine 492 participates in a covalent cross-link: Glycyl lysine isopeptide (Lys-Gly) (interchain with G-Cter in SUMO2). Position 625 is a phosphoserine (serine 625). Residues 646–663 carry the MIU motif motif; that stretch reads QEEEDRQLALQLQRMFDN. The short motif at 670–682 is the LR motif element; it reads RRKGSVDQYLLRS. Serine 674 is subject to Phosphoserine.

The protein belongs to the RNF169 family. As to quaternary structure, interacts with DYRK1B. Phosphorylated by DYRK1A; phosphorylation increases RNF169 ability to block accumulation of TP53BP1 at the DSB sites.

The protein localises to the chromosome. It is found in the nucleus. The protein resides in the nucleoplasm. The catalysed reaction is S-ubiquitinyl-[E2 ubiquitin-conjugating enzyme]-L-cysteine + [acceptor protein]-L-lysine = [E2 ubiquitin-conjugating enzyme]-L-cysteine + N(6)-ubiquitinyl-[acceptor protein]-L-lysine.. Its pathway is protein modification; protein ubiquitination. Probable E3 ubiquitin-protein ligase that acts as a regulator of double-strand breaks (DSBs) repair following DNA damage. Functions in a non-canonical fashion to harness RNF168-mediated protein recruitment to DSB-containing chromatin, thereby contributing to regulation of DSB repair pathway utilization. Once recruited to DSB repair sites by recognizing and binding ubiquitin catalyzed by RNF168, competes with TP53BP1 and BRCA1 for association with RNF168-modified chromatin, thereby favouring homologous recombination repair (HRR) and single-strand annealing (SSA) instead of non-homologous end joining (NHEJ) mediated by TP53BP1. E3 ubiquitin-protein ligase activity is not required for regulation of DSBs repair. The protein is E3 ubiquitin-protein ligase RNF169 (RNF169) of Bos taurus (Bovine).